A 185-amino-acid polypeptide reads, in one-letter code: Ribosome-recycling factor (185 aa).

It belongs to the RRF family.

It is found in the cytoplasm. In terms of biological role, responsible for the release of ribosomes from messenger RNA at the termination of protein biosynthesis. May increase the efficiency of translation by recycling ribosomes from one round of translation to another. The sequence is that of Ribosome-recycling factor from Nitrosomonas europaea (strain ATCC 19718 / CIP 103999 / KCTC 2705 / NBRC 14298).